Here is a 644-residue protein sequence, read N- to C-terminus: Acetyl-coenzyme A synthetase (644 aa).

Residues 190–193 and threonine 308 contribute to the CoA site; that span reads RGSK. Residues 384-386, 408-413, aspartate 497, and arginine 512 contribute to the ATP site; these read GEP and DTWWQT. A CoA-binding site is contributed by serine 520. Position 523 (arginine 523) interacts with ATP. The Mg(2+) site is built by valine 534, histidine 536, and valine 539. Arginine 581 serves as a coordination point for CoA. Lysine 606 carries the N6-acetyllysine modification.

Belongs to the ATP-dependent AMP-binding enzyme family. Requires Mg(2+) as cofactor. Acetylated. Deacetylation by the SIR2-homolog deacetylase activates the enzyme.

It catalyses the reaction acetate + ATP + CoA = acetyl-CoA + AMP + diphosphate. Its function is as follows. Catalyzes the conversion of acetate into acetyl-CoA (AcCoA), an essential intermediate at the junction of anabolic and catabolic pathways. AcsA undergoes a two-step reaction. In the first half reaction, AcsA combines acetate with ATP to form acetyl-adenylate (AcAMP) intermediate. In the second half reaction, it can then transfer the acetyl group from AcAMP to the sulfhydryl group of CoA, forming the product AcCoA. This chain is Acetyl-coenzyme A synthetase, found in Magnetococcus marinus (strain ATCC BAA-1437 / JCM 17883 / MC-1).